The chain runs to 260 residues: MSLQKTPPTRVFVELVPWADRSRENNLASGRETLPGLRHPLSSTQAQTATREVQVSGTSEVSAGPDRAQVVVRVSSTKEAAAEAKKSVCRRLDYITQSLQQQGVQAENITVTKDFRRVENAYHMEAEVCITFTEFGKMQNICNFLVEKLDSSVVISPPQFYHTPGSVENLRRQACLVAVENAWRKAQEVCNLVGQTLGKPLLIKEEETKEWEGQIDDHQSSRLSSSLTVQQKIKSATIHAASKVFITFEVKGKEKRKKHL.

The tract at residues 30-50 (GRETLPGLRHPLSSTQAQTAT) is disordered. Residues 41–50 (LSSTQAQTAT) show a composition bias toward polar residues. 3 positions are modified to phosphoserine: Ser56, Ser62, and Ser235. Thr237 carries the post-translational modification Phosphothreonine. Residues 240-260 (AASKVFITFEVKGKEKRKKHL) are required for nuclear localization (NLS). Residue Ser242 is modified to Phosphoserine. Thr247 is modified (phosphothreonine).

Belongs to the IRAK1BP1 family. As to quaternary structure, interacts with IRAK1 and RELA. Interacts with HSPA8 and HSPA1. In terms of processing, phosphorylation at Ser-56 and/or Ser-62 is required for full activity. Phosphorylated on at least one of Ser-235, Thr-237, Ser-242 and Thr-247 upon TNF-alpha activation, which favors nuclear translocation.

The protein resides in the cytoplasm. The protein localises to the nucleus. Its function is as follows. Component of the IRAK1-dependent TNFRSF1A signaling pathway that leads to NF-kappa-B activation and is required for cell survival. Acts by enhancing RELA transcriptional activity. This Homo sapiens (Human) protein is Interleukin-1 receptor-associated kinase 1-binding protein 1 (IRAK1BP1).